A 77-amino-acid chain; its full sequence is uncharacterized protein (77 aa).

A run of 2 helical transmembrane segments spans residues 3–23 (FNFI…SFLF) and 35–55 (IGAI…VALL).

Its subcellular location is the cell membrane. This is an uncharacterized protein from Haemophilus influenzae (strain ATCC 51907 / DSM 11121 / KW20 / Rd).